Consider the following 179-residue polypeptide: Large ribosomal subunit protein uL5 (179 aa).

The protein belongs to the universal ribosomal protein uL5 family. Part of the 50S ribosomal subunit; part of the 5S rRNA/L5/L18/L25 subcomplex. Contacts the 5S rRNA and the P site tRNA. Forms a bridge to the 30S subunit in the 70S ribosome.

Its function is as follows. This is one of the proteins that bind and probably mediate the attachment of the 5S RNA into the large ribosomal subunit, where it forms part of the central protuberance. In the 70S ribosome it contacts protein S13 of the 30S subunit (bridge B1b), connecting the 2 subunits; this bridge is implicated in subunit movement. Contacts the P site tRNA; the 5S rRNA and some of its associated proteins might help stabilize positioning of ribosome-bound tRNAs. The chain is Large ribosomal subunit protein uL5 from Thioalkalivibrio sulfidiphilus (strain HL-EbGR7).